A 212-amino-acid chain; its full sequence is Pyridoxine/pyridoxamine 5'-phosphate oxidase (212 aa).

Residues 7–10 (RREY) and K65 each bind substrate. Residues 60-65 (RIVLLK), 75-76 (FT), R81, K82, and Q104 contribute to the FMN site. Substrate contacts are provided by Y122, R126, and S130. FMN-binding positions include 139-140 (QS) and W184. 190–192 (RLH) serves as a coordination point for substrate. Residue R194 coordinates FMN.

Belongs to the pyridoxamine 5'-phosphate oxidase family. As to quaternary structure, homodimer. Requires FMN as cofactor.

It carries out the reaction pyridoxamine 5'-phosphate + O2 + H2O = pyridoxal 5'-phosphate + H2O2 + NH4(+). The catalysed reaction is pyridoxine 5'-phosphate + O2 = pyridoxal 5'-phosphate + H2O2. The protein operates within cofactor metabolism; pyridoxal 5'-phosphate salvage; pyridoxal 5'-phosphate from pyridoxamine 5'-phosphate: step 1/1. Its pathway is cofactor metabolism; pyridoxal 5'-phosphate salvage; pyridoxal 5'-phosphate from pyridoxine 5'-phosphate: step 1/1. In terms of biological role, catalyzes the oxidation of either pyridoxine 5'-phosphate (PNP) or pyridoxamine 5'-phosphate (PMP) into pyridoxal 5'-phosphate (PLP). The chain is Pyridoxine/pyridoxamine 5'-phosphate oxidase from Pseudoalteromonas translucida (strain TAC 125).